Here is a 611-residue protein sequence, read N- to C-terminus: MTDKEKRLERQSRIRNFSIIAHIDHGKSTLADRILEKTSAITQREMKEQLLDSMDLERERGITIKLNSVQLKYKAKDGEEYIFHLIDTPGHVDFTYEVSRSLAACEGAILVVDAAQGIEAQTLANVYLALDNDLEILPVINKIDLPSAEPERVRQEVEDVIGLDASDAVLASAKAGIGIEDILEQIVEKVPAPAGDPEAPLKALIFDSLYDAYRGVVAYIRVVEGTVKPGQKIKMMATGKEFEVIEVGVFTPKAQPADELTVGDVGYLTAAIKNVGDTRVGDTITSAVKPAAEALPGYRKLNPMVYCGLYPIDTAKYNDLREALEKLELNDSSLQYEAETSQALGFGFRCGFLGMLHMEIIQERIEREFKIDLITTAPSVIYDVYMTDGEKIIVDNPSNMPDPQKIERVEEPYVKATMMVPNDYVGAVMELCQGKRGNFIDMQYLDANRVSIVYEMPLAEIVYEFFDQLKSSTKGYASFDYELIGYKPSKLVKMDIMLNGEKIDALSFIVHRDYAYERGKVIVEKLKELIPRQHFEVPIQAAIGQKIVARSTIKAMRKNVLAKCYGGDISRKRKLLEKQKEGKRRMKQVGSVEVPQEAFMAVLKMDDSPKK.

The tr-type G domain maps to 12–194 (SRIRNFSIIA…QIVEKVPAPA (183 aa)). GTP contacts are provided by residues 24–29 (DHGKST) and 141–144 (NKID).

It belongs to the TRAFAC class translation factor GTPase superfamily. Classic translation factor GTPase family. LepA subfamily.

It is found in the cell membrane. The catalysed reaction is GTP + H2O = GDP + phosphate + H(+). In terms of biological role, required for accurate and efficient protein synthesis under certain stress conditions. May act as a fidelity factor of the translation reaction, by catalyzing a one-codon backward translocation of tRNAs on improperly translocated ribosomes. Back-translocation proceeds from a post-translocation (POST) complex to a pre-translocation (PRE) complex, thus giving elongation factor G a second chance to translocate the tRNAs correctly. Binds to ribosomes in a GTP-dependent manner. This Bacillus velezensis (strain DSM 23117 / BGSC 10A6 / LMG 26770 / FZB42) (Bacillus amyloliquefaciens subsp. plantarum) protein is Elongation factor 4.